We begin with the raw amino-acid sequence, 564 residues long: Dihydroxy-acid dehydratase (564 aa).

Cys-50 contacts [2Fe-2S] cluster. Mg(2+) is bound at residue Asp-82. Cys-123 is a binding site for [2Fe-2S] cluster. Mg(2+) is bound by residues Asp-124 and Lys-125. Lys-125 carries the post-translational modification N6-carboxylysine. Residue Cys-195 participates in [2Fe-2S] cluster binding. Glu-447 serves as a coordination point for Mg(2+). Ser-473 acts as the Proton acceptor in catalysis.

The protein belongs to the IlvD/Edd family. As to quaternary structure, homodimer. [2Fe-2S] cluster is required as a cofactor. Requires Mg(2+) as cofactor.

It carries out the reaction (2R)-2,3-dihydroxy-3-methylbutanoate = 3-methyl-2-oxobutanoate + H2O. It catalyses the reaction (2R,3R)-2,3-dihydroxy-3-methylpentanoate = (S)-3-methyl-2-oxopentanoate + H2O. The protein operates within amino-acid biosynthesis; L-isoleucine biosynthesis; L-isoleucine from 2-oxobutanoate: step 3/4. It participates in amino-acid biosynthesis; L-valine biosynthesis; L-valine from pyruvate: step 3/4. Its function is as follows. Functions in the biosynthesis of branched-chain amino acids. Catalyzes the dehydration of (2R,3R)-2,3-dihydroxy-3-methylpentanoate (2,3-dihydroxy-3-methylvalerate) into 2-oxo-3-methylpentanoate (2-oxo-3-methylvalerate) and of (2R)-2,3-dihydroxy-3-methylbutanoate (2,3-dihydroxyisovalerate) into 2-oxo-3-methylbutanoate (2-oxoisovalerate), the penultimate precursor to L-isoleucine and L-valine, respectively. The polypeptide is Dihydroxy-acid dehydratase (Chloroflexus aggregans (strain MD-66 / DSM 9485)).